We begin with the raw amino-acid sequence, 130 residues long: Protein UL145 (130 aa).

In terms of assembly, interacts with host DDB1; this interaction promotes STAT2 degradation.

In terms of biological role, plays a role in the inhibition of host innate immunity by exploiting host DDB1-cullin RING ubiquitin ligases (CRLs). Mechanistically, recruits host DDB1 via a DCAF-like interaction motif to antagonize IFN signaling by STAT2 degradation. This is Protein UL145 (UL145) from Homo sapiens (Human).